The chain runs to 356 residues: Molybdenum import ATP-binding protein ModC (356 aa).

An ABC transporter domain is found at 1–232 (MEDIHARFHI…LDLPIRLGED (232 aa)). 33–40 (GHSGSGKT) is a binding site for ATP. The Mop domain occupies 291 to 356 (ETSVLNLLRG…VQVKSVALME (66 aa)).

It belongs to the ABC transporter superfamily. Molybdate importer (TC 3.A.1.8) family. As to quaternary structure, the complex is composed of two ATP-binding proteins (ModC), two transmembrane proteins (ModB) and a solute-binding protein (ModA).

Its subcellular location is the cell inner membrane. The enzyme catalyses molybdate(out) + ATP + H2O = molybdate(in) + ADP + phosphate + H(+). Part of the ABC transporter complex ModABC involved in molybdenum import. Responsible for energy coupling to the transport system. The sequence is that of Molybdenum import ATP-binding protein ModC from Methylococcus capsulatus (strain ATCC 33009 / NCIMB 11132 / Bath).